The chain runs to 134 residues: Small ribosomal subunit protein uS8c (134 aa).

Belongs to the universal ribosomal protein uS8 family. Part of the 30S ribosomal subunit.

It is found in the plastid. It localises to the chloroplast. In terms of biological role, one of the primary rRNA binding proteins, it binds directly to 16S rRNA central domain where it helps coordinate assembly of the platform of the 30S subunit. This is Small ribosomal subunit protein uS8c (rps8) from Gossypium hirsutum (Upland cotton).